The chain runs to 241 residues: Proteasome subunit alpha (241 aa).

It belongs to the peptidase T1A family. As to quaternary structure, the 20S proteasome core is composed of 14 alpha and 14 beta subunits that assemble into four stacked heptameric rings, resulting in a barrel-shaped structure. The two inner rings, each composed of seven catalytic beta subunits, are sandwiched by two outer rings, each composed of seven alpha subunits. The catalytic chamber with the active sites is on the inside of the barrel. Has a gated structure, the ends of the cylinder being occluded by the N-termini of the alpha-subunits. Is capped at one or both ends by the proteasome regulatory ATPase, PAN.

It is found in the cytoplasm. Its activity is regulated as follows. The formation of the proteasomal ATPase PAN-20S proteasome complex, via the docking of the C-termini of PAN into the intersubunit pockets in the alpha-rings, triggers opening of the gate for substrate entry. Interconversion between the open-gate and close-gate conformations leads to a dynamic regulation of the 20S proteasome proteolysis activity. In terms of biological role, component of the proteasome core, a large protease complex with broad specificity involved in protein degradation. This is Proteasome subunit alpha from Saccharolobus islandicus (strain M.16.4 / Kamchatka #3) (Sulfolobus islandicus).